The following is a 482-amino-acid chain: tRNA sulfurtransferase (482 aa).

The 105-residue stretch at 61–165 (EQAIEALACI…GEELFIVSAI (105 aa)) folds into the THUMP domain. Residues 183–184 (LI), K265, G287, and Q296 contribute to the ATP site. Cysteines 344 and 456 form a disulfide. Residues 404–482 (SGDNEVILDI…GFANVKVYRP (79 aa)) enclose the Rhodanese domain. C456 functions as the Cysteine persulfide intermediate in the catalytic mechanism.

The protein belongs to the ThiI family.

Its subcellular location is the cytoplasm. It carries out the reaction [ThiI sulfur-carrier protein]-S-sulfanyl-L-cysteine + a uridine in tRNA + 2 reduced [2Fe-2S]-[ferredoxin] + ATP + H(+) = [ThiI sulfur-carrier protein]-L-cysteine + a 4-thiouridine in tRNA + 2 oxidized [2Fe-2S]-[ferredoxin] + AMP + diphosphate. The catalysed reaction is [ThiS sulfur-carrier protein]-C-terminal Gly-Gly-AMP + S-sulfanyl-L-cysteinyl-[cysteine desulfurase] + AH2 = [ThiS sulfur-carrier protein]-C-terminal-Gly-aminoethanethioate + L-cysteinyl-[cysteine desulfurase] + A + AMP + 2 H(+). The protein operates within cofactor biosynthesis; thiamine diphosphate biosynthesis. In terms of biological role, catalyzes the ATP-dependent transfer of a sulfur to tRNA to produce 4-thiouridine in position 8 of tRNAs, which functions as a near-UV photosensor. Also catalyzes the transfer of sulfur to the sulfur carrier protein ThiS, forming ThiS-thiocarboxylate. This is a step in the synthesis of thiazole, in the thiamine biosynthesis pathway. The sulfur is donated as persulfide by IscS. This chain is tRNA sulfurtransferase, found in Aeromonas hydrophila subsp. hydrophila (strain ATCC 7966 / DSM 30187 / BCRC 13018 / CCUG 14551 / JCM 1027 / KCTC 2358 / NCIMB 9240 / NCTC 8049).